The following is a 421-amino-acid chain: UDP-N-acetylglucosamine 1-carboxyvinyltransferase (421 aa).

Position 22-23 (22-23 (KN)) interacts with phosphoenolpyruvate. Arginine 93 contributes to the UDP-N-acetyl-alpha-D-glucosamine binding site. The active-site Proton donor is the cysteine 117. Cysteine 117 carries the post-translational modification 2-(S-cysteinyl)pyruvic acid O-phosphothioketal. Residues 122–126 (RPVDL), aspartate 308, and valine 330 contribute to the UDP-N-acetyl-alpha-D-glucosamine site.

It belongs to the EPSP synthase family. MurA subfamily.

The protein resides in the cytoplasm. It catalyses the reaction phosphoenolpyruvate + UDP-N-acetyl-alpha-D-glucosamine = UDP-N-acetyl-3-O-(1-carboxyvinyl)-alpha-D-glucosamine + phosphate. The protein operates within cell wall biogenesis; peptidoglycan biosynthesis. Cell wall formation. Adds enolpyruvyl to UDP-N-acetylglucosamine. This chain is UDP-N-acetylglucosamine 1-carboxyvinyltransferase, found in Pseudomonas paraeruginosa (strain DSM 24068 / PA7) (Pseudomonas aeruginosa (strain PA7)).